We begin with the raw amino-acid sequence, 1042 residues long: Sarcoplasmic/endoplasmic reticulum calcium ATPase 2 (1042 aa).

The Cytoplasmic portion of the chain corresponds to 1-48; that stretch reads MENAHTKTVEEVLGHFGVNESTGLSLEQVKKLKERWGSNELPAEEGKT. A Phosphoserine modification is found at Ser-38. The helical transmembrane segment at 49 to 69 threads the bilayer; it reads LLELVIEQFEDLLVRILLLAA. The Lumenal segment spans residues 70–89; the sequence is CISFVLAWFEEGEETITAFV. The chain crosses the membrane as a helical span at residues 90–110; that stretch reads EPFVILLILVANAIVGVWQER. Over 111–253 the chain is Cytoplasmic; it reads NAENAIEALK…QERTPLQQKL (143 aa). Residues 254–273 form a helical membrane-spanning segment; it reads DEFGEQLSKVISLICIAVWI. Over 274–295 the chain is Lumenal; sequence INIGHFNDPVHGGSWIRGAIYY. A 3'-nitrotyrosine mark is found at Tyr-294 and Tyr-295. The chain crosses the membrane as a helical span at residues 296–313; sequence FKIAVALAVAAIPEGLPA. 4 residues coordinate Ca(2+): Val-304, Ala-305, Ile-307, and Glu-309. Residues 314 to 756 lie on the Cytoplasmic side of the membrane; the sequence is VITTCLALGT…EEGRAIYNNM (443 aa). Catalysis depends on Asp-351, which acts as the 4-aspartylphosphate intermediate. Asp-351 and Thr-353 together coordinate Mg(2+). Position 353 (Thr-353) interacts with ATP. Position 441 is a phosphothreonine (Thr-441). ATP contacts are provided by Glu-442, Arg-489, and Lys-514. Position 531 is a phosphoserine (Ser-531). Arg-559 is an ATP binding site. The interval 575-594 is interaction with HAX1; the sequence is MHLKDSANFIKYETNLTFVG. Position 580 is a phosphoserine (Ser-580). Residues Thr-624, Gly-625, and Asp-626 each coordinate ATP. Ser-663 carries the phosphoserine modification. ATP-binding residues include Arg-677 and Lys-683. A Mg(2+)-binding site is contributed by Asp-702. An ATP-binding site is contributed by Asn-705. A helical transmembrane segment spans residues 757 to 776; the sequence is KQFIRYLISSNVGEVVCIFL. Residues Asn-767 and Glu-770 each coordinate Ca(2+). The Lumenal portion of the chain corresponds to 777–786; it reads TAALGFPEAL. Residues 787–807 traverse the membrane as a helical segment; it reads IPVQLLWVNLVTDGLPATALG. The interaction with PLN stretch occupies residues 787–807; it reads IPVQLLWVNLVTDGLPATALG. Positions 788 to 1042 are interaction with TMEM64 and PDIA3; that stretch reads PVQLLWVNLV…DTNFSDLLWS (255 aa). The Ca(2+) site is built by Asn-795, Thr-798, and Asp-799. Residues 808-827 are Cytoplasmic-facing; the sequence is FNPPDLDIMNKPPRNPKEPL. The chain crosses the membrane as a helical span at residues 828–850; sequence ISGWLFFRYLAIGCYVGAATVGA. The Lumenal portion of the chain corresponds to 851–896; the sequence is AAWWFIAADGGPRVSFYQLSHFLQCKEDNPDFEGVDCAIFESPYPM. A disulfide bridge links Cys-875 with Cys-887. Residues 897-916 traverse the membrane as a helical segment; that stretch reads TMALSVLVTIEMCNALNSLS. A Ca(2+)-binding site is contributed by Glu-907. The Cytoplasmic portion of the chain corresponds to 917–929; that stretch reads ENQSLLRMPPWEN. Residues 930-948 form a helical membrane-spanning segment; that stretch reads IWLVGSICLSMSLHFLILY. Residues 931–942 are interaction with PLN; the sequence is WLVGSICLSMSL. Topologically, residues 949-963 are lumenal; it reads VEPLPLIFQITPLNV. The chain crosses the membrane as a helical span at residues 964 to 984; it reads TQWLMVLKISLPVILMDETLK. Over 985 to 1042 the chain is Cytoplasmic; the sequence is FVARNYLEPGKECVQPAPQSCSLWACTEGVSWPFVLLIVPLVMWVYSTDTNFSDLLWS.

This sequence belongs to the cation transport ATPase (P-type) (TC 3.A.3) family. Type IIA subfamily. Interacts with sarcolipin (SLN); the interaction inhibits ATP2A2 Ca(2+) affinity. Interacts with phospholamban (PLN); the interaction inhibits ATP2A2 Ca(2+) affinity. Interacts with myoregulin (MRLN). Interacts with ARLN and ERLN; the interactions inhibit ATP2A2 Ca(2+) affinity. Interacts with SRTIT1/DWORF; the interaction results in activation of ATP2A2. Interacts with the monomeric forms of SLN, PLN, ARLN, ERLN and STRI1/DWORF. Interacts with HAX1. Interacts with S100A8 and S100A9. Interacts with SLC35G1 and STIM1. Interacts with TMEM203. Interacts with TMEM64 and PDIA3. Interacts with TMX1. Interacts with TMX2. Interacts with VMP1; VMP1 competes with PLN and SLN to prevent them from forming an inhibitory complex with ATP2A2. Interacts with ULK1. Interacts with TUNAR. Interacts with FLVCR2; this interaction occurs in the absence of heme and promotes ATP2A2 proteasomal degradation; this complex is dissociated upon heme binding. Interacts with FNIP1. As to quaternary structure, interacts with TRAM2 (via C-terminus). Mg(2+) serves as cofactor. In terms of processing, nitrated under oxidative stress. Nitration on the two tyrosine residues inhibits catalytic activity. Post-translationally, serotonylated on Gln residues by TGM2 in response to hypoxia, leading to its inactivation. Isoform 2 is highly expressed in heart and slow twitch skeletal muscle. Isoform 1 is widely expressed.

The protein resides in the endoplasmic reticulum membrane. The protein localises to the sarcoplasmic reticulum membrane. It carries out the reaction Ca(2+)(in) + ATP + H2O = Ca(2+)(out) + ADP + phosphate + H(+). Has different conformational states with differential Ca2+ affinity. The E1 conformational state (active form) shows high Ca(2+) affinity, while the E2 state exhibits low Ca(2+) affinity. Binding of ATP allosterically increases its affinity for subsequent binding of Ca2+. Reversibly inhibited by phospholamban (PLN) at low calcium concentrations. PLN inhibits ATP2A2 Ca(2+) affinity by disrupting its allosteric activation by ATP. Inhibited by sarcolipin (SLN) and myoregulin (MRLN). The inhibition is blocked by VMP1. Enhanced by STRIT1/DWORF; STRIT1 increases activity by displacing sarcolipin (SLN), phospholamban (PLN) and myoregulin (MRLN). Stabilizes SERCA2 in its E2 state. Functionally, this magnesium-dependent enzyme catalyzes the hydrolysis of ATP coupled with the translocation of calcium from the cytosol to the sarcoplasmic reticulum lumen. Involved in autophagy in response to starvation. Upon interaction with VMP1 and activation, controls ER-isolation membrane contacts for autophagosome formation. Also modulates ER contacts with lipid droplets, mitochondria and endosomes. In coordination with FLVCR2 mediates heme-stimulated switching from mitochondrial ATP synthesis to thermogenesis. Involved in the regulation of the contraction/relaxation cycle. Acts as a regulator of TNFSF11-mediated Ca(2+) signaling pathways via its interaction with TMEM64 which is critical for the TNFSF11-induced CREB1 activation and mitochondrial ROS generation necessary for proper osteoclast generation. Association between TMEM64 and SERCA2 in the ER leads to cytosolic Ca(2+) spiking for activation of NFATC1 and production of mitochondrial ROS, thereby triggering Ca(2+) signaling cascades that promote osteoclast differentiation and activation. In Oryctolagus cuniculus (Rabbit), this protein is Sarcoplasmic/endoplasmic reticulum calcium ATPase 2 (ATP2A2).